A 305-amino-acid polypeptide reads, in one-letter code: Aquaporin-1 (305 aa).

A disordered region spans residues 1 to 34; sequence MSSNDSNDTDKQHTRLDPTGVDDAYIPPEQPETK. Over 1–48 the chain is Cytoplasmic; the sequence is MSSNDSNDTDKQHTRLDPTGVDDAYIPPEQPETKHHRFKISKDTLRNH. The chain crosses the membrane as a helical span at residues 49-69; that stretch reads FIAAAGEFCGTFMFLWCAYVI. Residues 70–91 are Extracellular-facing; it reads CNVANHDVALVAAPDGSHPGQL. Residues 92–112 form a helical membrane-spanning segment; that stretch reads IMIAIGFGFSVMFSIWCFAGV. Residues 113–136 are Cytoplasmic-facing; that stretch reads SGGALNPAMSLSLCLARAVSPTRC. Residues 118 to 120 carry the NPA 1 motif; that stretch reads NPA. A helical membrane pass occupies residues 137–157; it reads VVMWVSQIVAGMAAGGAASAM. Residues 158–176 lie on the Extracellular side of the membrane; that stretch reads TPGEVLFANSLGLGCSRTR. The helical transmembrane segment at 177-197 threads the bilayer; that stretch reads GLFLEMFGTAILCLTVLMTAV. The Cytoplasmic segment spans residues 198-203; it reads EKRETN. Residues 204–224 traverse the membrane as a helical segment; the sequence is FMAALPIGISLFIAHVALTAY. The Extracellular segment spans residues 225-248; the sequence is TGTGVNPARSLGAAVAARYFPHYH. Positions 230-232 match the NPA 2 motif; it reads NPA. A helical transmembrane segment spans residues 249–269; sequence WIYWIGTLLGSILAWSVWQLL. Residues 270-305 are Cytoplasmic-facing; that stretch reads QILDYTTYVTAEKAASTKEKAQKKGETSSSSAVAEV. Residues 286–295 show a composition bias toward basic and acidic residues; it reads TKEKAQKKGE. Positions 286-305 are disordered; sequence TKEKAQKKGETSSSSAVAEV. Residues 296-305 are compositionally biased toward polar residues; the sequence is TSSSSAVAEV.

The protein belongs to the MIP/aquaporin (TC 1.A.8) family.

It localises to the endoplasmic reticulum membrane. Its subcellular location is the cell membrane. Its function is as follows. Water channel required to facilitate the transport of water across membranes. Involved in sporulation, freeze tolerance and osmotolerance. Is non-functional in most laboratory strains. The sequence is that of Aquaporin-1 (AQY1) from Saccharomyces cerevisiae (strain YJM789) (Baker's yeast).